The chain runs to 461 residues: Lysosomal proton-coupled steroid conjugate and bile acid symporter SLC46A3 (461 aa).

The signal sequence occupies residues 1-25 (MKIPFVEPVICLSVFAVTLNSPLTT). Over 26-70 (QYVYRRIWEETGNYSIALESNTSECAKNKSSPIFAFQEEVQKKVS) the chain is Extracellular. N-linked (GlcNAc...) asparagine glycosylation is found at Asn38, Asn46, and Asn53. The chain crosses the membrane as a helical span at residues 71 to 91 (LFNLEMDISGLIPGLVSTFVF). Topologically, residues 92 to 101 (LSHSDHGGRK) are cytoplasmic. A helical membrane pass occupies residues 102–124 (FPLILSSVGALANSAWLCLLSYF). The Extracellular segment spans residues 125–133 (ALPIQLLIA). Residues 134–156 (STFIGALFGNYTTFLGASFAYIV) form a helical membrane-spanning segment. Residues 157–170 (DQCKEKKQRTIRIA) are Cytoplasmic-facing. The helical transmembrane segment at 171 to 191 (IIDFLFGVVSGLTGLSSGYFI) threads the bilayer. Residues 192–195 (RGLG) are Extracellular-facing. The chain crosses the membrane as a helical span at residues 196–216 (FVWSFLIVTVALFVNLIYILL). Over 217 to 261 (FLEDSMKESSSQNISVSWTETFKNLFHRTYMLFKNASGEQQSLCC) the chain is Cytoplasmic. A helical transmembrane segment spans residues 262 to 282 (LLLFTMITYFFVTIGVSPIFV). Over 283–294 (LYELDSPLCWDE) the chain is Extracellular. The chain crosses the membrane as a helical span at residues 295-315 (VLIGYGSALGSVTFFSSFLGI). Topologically, residues 316 to 324 (WLFSYCMED) are cytoplasmic. A helical membrane pass occupies residues 325–345 (IHMAFIGTFTTMVGMAMTAFA). Residues 346–347 (RT) lie on the Extracellular side of the membrane. Residues 348 to 368 (TLMMFLVRLPFLFTVMPLSVL) traverse the membrane as a helical segment. Residues 369 to 382 (RSMISKVVHSTEQG) are Cytoplasmic-facing. Residues 383-403 (TMFACLAFLETLGGITAVSTF) form a helical membrane-spanning segment. The Extracellular portion of the chain corresponds to 404–415 (NGIYSATVAWCK). Residues 416 to 436 (GFVFLLSAVLLLIPAISLCVI) traverse the membrane as a helical segment. Over 437-461 (KYVSRNTGSYVLLIQEESSEDTSDR) the chain is Cytoplasmic. The short motif at 446–449 (YVLL) is the Tyrosine-based lysosomal-sorting motif element.

Belongs to the major facilitator superfamily. SLC46A family.

It is found in the lysosome membrane. The enzyme catalyses estrone 3-sulfate(out) + n H(+)(out) = estrone 3-sulfate(in) + n H(+)(in). It catalyses the reaction 25-hydroxyvitamin D3 sulfate(out) + n H(+)(out) = 25-hydroxyvitamin D3 sulfate(in) + n H(+)(in). It carries out the reaction cholate(out) + n H(+)(out) = cholate(in) + n H(+)(in). The catalysed reaction is glycocholate(out) + n H(+)(out) = glycocholate(in) + n H(+)(in). The enzyme catalyses taurocholate(out) + n H(+)(out) = taurocholate(in) + n H(+)(in). It catalyses the reaction dehydroepiandrosterone 3-sulfate(out) + n H(+)(out) = dehydroepiandrosterone 3-sulfate(in) + n H(+)(in). It carries out the reaction N-acetyl-D-muramoyl-L-alanyl-D-isoglutamine(out) + n H(+)(out) = N-acetyl-D-muramoyl-L-alanyl-D-isoglutamine(in) + n H(+)(in). The catalysed reaction is 2',3'-cGAMP(out) + n H(+)(out) = 2',3'-cGAMP(in) + n H(+)(in). In terms of biological role, lysosomal proton-coupled steroid conjugate and bile acid transporter. Preferentially recognizes lipophilic steroid conjugates or bile acis as endogenous substrates and seems to mediate escape from lysosomes to the cytoplasm. Modulates hepatic cytosolic copper homeostasis, maybe acting as a lysosomal copper transporter and sequestering copper ions in the lysosome. Delivers pathogen-associated molecular patterns to cytosolic pattern recognition receptors as part of the innate immune response to microbes. Selectively transports bacterial muramyl dipeptide (MDP) into the cytosol for recognition by NOD2, triggering inflammatory responses. Likely acts as a redundant importer of cyclic GMP-AMP dinucleotides (cGAMPs) in monocyte and macrophage cell lineages. The transport mechanism, its electrogenicity and stoichiometry remain to be elucidated. The sequence is that of Lysosomal proton-coupled steroid conjugate and bile acid symporter SLC46A3 (SLC46A3) from Bos taurus (Bovine).